Reading from the N-terminus, the 194-residue chain is Probable GTP-binding protein EngB (194 aa).

One can recognise an EngB-type G domain in the interval 22-194; that stretch reads LFLEVAFAGR…WQELDTMLNP (173 aa). Residues 30–37, 57–61, 75–78, 142–145, and 173–175 each bind GTP; these read GRSNVGKS, GCTQL, DLPG, TKAD, and FSS. Mg(2+) contacts are provided by serine 37 and threonine 59.

This sequence belongs to the TRAFAC class TrmE-Era-EngA-EngB-Septin-like GTPase superfamily. EngB GTPase family. The cofactor is Mg(2+).

Its function is as follows. Necessary for normal cell division and for the maintenance of normal septation. This Desulforapulum autotrophicum (strain ATCC 43914 / DSM 3382 / VKM B-1955 / HRM2) (Desulfobacterium autotrophicum) protein is Probable GTP-binding protein EngB.